Reading from the N-terminus, the 376-residue chain is Succinyl-diaminopimelate desuccinylase (376 aa).

Position 66 (H66) interacts with Zn(2+). D68 is a catalytic residue. Zn(2+) is bound at residue D99. The Proton acceptor role is filled by E133. The Zn(2+) site is built by E134, E162, and H348.

Belongs to the peptidase M20A family. DapE subfamily. In terms of assembly, homodimer. Zn(2+) serves as cofactor. Requires Co(2+) as cofactor.

The enzyme catalyses N-succinyl-(2S,6S)-2,6-diaminopimelate + H2O = (2S,6S)-2,6-diaminopimelate + succinate. It functions in the pathway amino-acid biosynthesis; L-lysine biosynthesis via DAP pathway; LL-2,6-diaminopimelate from (S)-tetrahydrodipicolinate (succinylase route): step 3/3. Functionally, catalyzes the hydrolysis of N-succinyl-L,L-diaminopimelic acid (SDAP), forming succinate and LL-2,6-diaminopimelate (DAP), an intermediate involved in the bacterial biosynthesis of lysine and meso-diaminopimelic acid, an essential component of bacterial cell walls. The sequence is that of Succinyl-diaminopimelate desuccinylase from Xanthomonas oryzae pv. oryzae (strain MAFF 311018).